A 347-amino-acid polypeptide reads, in one-letter code: Ataxin-7-like protein 3 (347 aa).

The SGF11-type zinc-finger motif lies at 84 to 105 (CVCPNCSRSIAASRFAPHLEKC). Positions 116 to 125 (ANRRIANSNN) are enriched in low complexity. Residues 116-184 (ANRRIANSNN…GELSNSDPFK (69 aa)) form a disordered region. 2 positions are modified to phosphoserine: Ser-129 and Ser-131. Over residues 132–141 (DQEDNDDIND) the composition is skewed to acidic residues. An SCA7 domain is found at 196–263 (LGPEELRSLL…SLDNDGFDMT (68 aa)). A compositionally biased stretch (low complexity) spans 275-288 (DGSSDLSPSDSGSS). The disordered stretch occupies residues 275–347 (DGSSDLSPSD…PTPSIYDDIN (73 aa)). Phosphoserine is present on residues Ser-278, Ser-281, and Ser-326.

It belongs to the SGF11 family. In terms of assembly, component of some SAGA transcription coactivator-HAT complexes, at least composed of ATXN7, ATXN7L3, ENY2, GCN5L2, SUPT3H, TAF10, TRRAP and USP22. Within the SAGA complex, ENY2, ATXN7, ATXN7L3, and USP22 form an additional subcomplex of SAGA called the DUB module (deubiquitination module). Interacts directly with ENY2 and USP22.

The protein resides in the nucleus. Functionally, component of the transcription regulatory histone acetylation (HAT) complex SAGA, a multiprotein complex that activates transcription by remodeling chromatin and mediating histone acetylation and deubiquitination. Within the SAGA complex, participates in a subcomplex that specifically deubiquitinates both histones H2A and H2B. The SAGA complex is recruited to specific gene promoters by activators such as MYC, where it is required for transcription. Required for nuclear receptor-mediated transactivation. Within the complex, it is required to recruit USP22 and ENY2 into the SAGA complex. Regulates H2B monoubiquitination (H2Bub1) levels. Affects subcellular distribution of ENY2, USP22 and ATXN7L3B. The chain is Ataxin-7-like protein 3 (Atxn7l3) from Mus musculus (Mouse).